We begin with the raw amino-acid sequence, 343 residues long: Flavone 3'-O-methyltransferase OMT1 (343 aa).

Asparagine 107 is a binding site for (E)-ferulate. S-adenosyl-L-homocysteine contacts are provided by glycine 184, aspartate 207, aspartate 227, methionine 228, methionine 240, and lysine 241. Catalysis depends on histidine 245, which acts as the Proton acceptor. (E)-5-hydroxyferulate is bound at residue aspartate 246. Catalysis depends on residues glutamate 273 and glutamate 305.

Belongs to the class I-like SAM-binding methyltransferase superfamily. Cation-independent O-methyltransferase family. COMT subfamily. As to quaternary structure, homodimer.

It catalyses the reaction (E)-5-hydroxyferulate + S-adenosyl-L-methionine = (E)-sinapate + S-adenosyl-L-homocysteine + H(+). The catalysed reaction is luteolin + S-adenosyl-L-methionine = chrysoeriol + S-adenosyl-L-homocysteine + H(+). The enzyme catalyses quercetin + S-adenosyl-L-methionine = isorhamnetin + S-adenosyl-L-homocysteine + H(+). It carries out the reaction (E)-caffeate + S-adenosyl-L-methionine = (E)-ferulate + S-adenosyl-L-homocysteine + H(+). It catalyses the reaction a 3'-hydroxyflavone + S-adenosyl-L-methionine = a 3'-methoxyflavone + S-adenosyl-L-homocysteine + H(+). Its pathway is flavonoid metabolism. Its function is as follows. Catalyzes the 3'-O-methylation of the flavonoids luteolin and quercetin. Catalyzes the 3- of 5-O-methylation of the phenylpropanoids caffeate and 5-hydroxyferulate. Substrate preference is 5-hydroxyferulate &gt; luteolin &gt; quercetin &gt; caffeate. Apigenin, kempferol and 3,4-dimethylquercetin do not seem to be substrates for methylation. In Chrysosplenium americanum (American golden saxifrage), this protein is Flavone 3'-O-methyltransferase OMT1.